The sequence spans 619 residues: Coagulation factor X-activating enzyme heavy chain (619 aa).

A signal peptide spans 1–20 (MMQVLLVTISLAVFPYQGSS). A propeptide spanning residues 21–188 (IILESGNVND…SDKPIKKASQ (168 aa)) is cleaved from the precursor. A Peptidase M12B domain is found at 199–393 (IFIELVIIVD…YKPKCIFNPP (195 aa)). A disulfide bridge links C215 with C251. 2 N-linked (GlcNAc...) (complex) asparagine glycosylation sites follow: N216 and N257. Intrachain disulfides connect C308–C388, C348–C372, and C350–C355. H333 lines the Zn(2+) pocket. The active site involves E334. The Zn(2+) site is built by H337 and H343. N351 and N371 each carry an N-linked (GlcNAc...) (complex) asparagine glycan. One can recognise a Disintegrin domain in the interval 401-487 (PPVCGNEIWE…ECPRDQLQQN (87 aa)). Ca(2+)-binding residues include V403, N406, I408, E410, E413, and D416. Disulfide bonds link C404–C433, C415–C428, C417–C423, C427–C450, C441–C447, C446–C472, C459–C479, C466–C498, C491–C503, C510–C560, C525–C571, C538–C548, C555–C597, and C591–C603. The D/ECD-tripeptide signature appears at 465–467 (ECD). Residues D467, V468, E470, D482, and Q483 each contribute to the Ca(2+) site.

This sequence belongs to the venom metalloproteinase (M12B) family. P-III subfamily. P-IIId sub-subfamily. Heterotrimer; disulfide-linked. The heterotrimer consists of 1 heavy chain and 2 light chains (lectins): LC1 and LC2. Zn(2+) serves as cofactor. Post-translationally, N-glycosylated; probably required for conformation. Removal of easily accessible sugars does not change its functional capacity, but removal of the core sugars with N-glycanase causes a virtually complete loss of enzyme activity, apparently as a result of major conformational changes in the molecule. Not O-glycosylated. In terms of tissue distribution, expressed by the venom gland.

Its subcellular location is the secreted. It catalyses the reaction Specifically activates several components of the blood clotting system, including coagulation factor X, coagulation factor IX and protein C by cleavage of Arg-|-Xaa bonds. Has no action on insulin B chain.. Functionally, catalytic subunit of blood coagulation factor X-activating enzyme. Activates coagulation factor X (F10) by cleaving the Arg-Ile bond and is also able to activate coagulation factor IX (F9) and protein S (PROS1) by specific cleavage of Arg-Ile and Arg-Val bonds. The protein is Coagulation factor X-activating enzyme heavy chain of Daboia siamensis (Eastern Russel's viper).